We begin with the raw amino-acid sequence, 353 residues long: Biotin synthase (353 aa).

The 220-residue stretch at 51–270 (NEVQCNQLLN…IALARIMMPK (220 aa)) folds into the Radical SAM core domain. Residues C66, C70, and C73 each coordinate [4Fe-4S] cluster. Positions 110, 141, 201, and 274 each coordinate [2Fe-2S] cluster. Residues 330 to 353 (APVEAHSHDHDHDHHDHHHGHSHS) form a disordered region. Positions 334–343 (AHSHDHDHDH) are enriched in basic and acidic residues. Residues 344-353 (HDHHHGHSHS) show a composition bias toward basic residues.

The protein belongs to the radical SAM superfamily. Biotin synthase family. In terms of assembly, homodimer. [4Fe-4S] cluster serves as cofactor. It depends on [2Fe-2S] cluster as a cofactor.

It catalyses the reaction (4R,5S)-dethiobiotin + (sulfur carrier)-SH + 2 reduced [2Fe-2S]-[ferredoxin] + 2 S-adenosyl-L-methionine = (sulfur carrier)-H + biotin + 2 5'-deoxyadenosine + 2 L-methionine + 2 oxidized [2Fe-2S]-[ferredoxin]. Its pathway is cofactor biosynthesis; biotin biosynthesis; biotin from 7,8-diaminononanoate: step 2/2. Functionally, catalyzes the conversion of dethiobiotin (DTB) to biotin by the insertion of a sulfur atom into dethiobiotin via a radical-based mechanism. The chain is Biotin synthase from Rhodopseudomonas palustris (strain HaA2).